We begin with the raw amino-acid sequence, 256 residues long: 4-oxalocrotonate decarboxylase (256 aa).

This sequence belongs to the hydratase/decarboxylase family. In terms of assembly, forms a complex with AmnF. The cofactor is Mg(2+). Requires Mn(2+) as cofactor.

The enzyme catalyses (3E)-2-oxohex-3-enedioate + H(+) = 2-oxopent-4-enoate + CO2. Its activity is regulated as follows. Strongly inhibited by Fe(2+), Fe(3+), K(3)[Fe(CN)(6)], Ag(+) and Cu(2+). Its function is as follows. Involved in the modified meta-cleavage pathway for the 2-aminophenol catabolism. The chain is 4-oxalocrotonate decarboxylase (amnE) from Pseudomonas sp.